The chain runs to 251 residues: 5-oxoprolinase subunit A (251 aa).

The protein belongs to the LamB/PxpA family. Forms a complex composed of PxpA, PxpB and PxpC.

It catalyses the reaction 5-oxo-L-proline + ATP + 2 H2O = L-glutamate + ADP + phosphate + H(+). In terms of biological role, catalyzes the cleavage of 5-oxoproline to form L-glutamate coupled to the hydrolysis of ATP to ADP and inorganic phosphate. The polypeptide is 5-oxoprolinase subunit A (Paracidovorax citrulli (strain AAC00-1) (Acidovorax citrulli)).